Consider the following 490-residue polypeptide: Acetyl-coenzyme A carboxylase carboxyl transferase subunit beta, chloroplastic (490 aa).

The CoA carboxyltransferase N-terminal domain maps to 228-490; that stretch reads LWVQCENCYG…FKLHAFFPLN (263 aa). C232, C235, C251, and C254 together coordinate Zn(2+). The C4-type zinc finger occupies 232-254; that stretch reads CENCYGLNYKKLLKSKMNICDQC.

The protein belongs to the AccD/PCCB family. In terms of assembly, acetyl-CoA carboxylase is a heterohexamer composed of biotin carboxyl carrier protein, biotin carboxylase and 2 subunits each of ACCase subunit alpha and ACCase plastid-coded subunit beta (accD). Zn(2+) is required as a cofactor.

The protein localises to the plastid. It is found in the chloroplast stroma. The catalysed reaction is N(6)-carboxybiotinyl-L-lysyl-[protein] + acetyl-CoA = N(6)-biotinyl-L-lysyl-[protein] + malonyl-CoA. The protein operates within lipid metabolism; malonyl-CoA biosynthesis; malonyl-CoA from acetyl-CoA: step 1/1. Its function is as follows. Component of the acetyl coenzyme A carboxylase (ACC) complex. Biotin carboxylase (BC) catalyzes the carboxylation of biotin on its carrier protein (BCCP) and then the CO(2) group is transferred by the transcarboxylase to acetyl-CoA to form malonyl-CoA. This is Acetyl-coenzyme A carboxylase carboxyl transferase subunit beta, chloroplastic from Eucalyptus globulus subsp. globulus (Tasmanian blue gum).